We begin with the raw amino-acid sequence, 1004 residues long: Phyllocladan-16-alpha-ol synthase (1004 aa).

A DXDD motif motif is present at residues 321–324 (DADD). Positions 667, 671, 872, 873, 876, and 880 each coordinate Mg(2+). The DEXXE motif motif lies at 667 to 671 (DEFME).

This sequence belongs to the terpene synthase family. Mg(2+) is required as a cofactor.

It catalyses the reaction (2E,6E,10E)-geranylgeranyl diphosphate = (+)-copalyl diphosphate. The enzyme catalyses (+)-copalyl diphosphate + H2O = phyllocladan-16alpha-ol + diphosphate. Functionally, involved in the synthesis of labdane-related hydrocarbons by catalyzing the conversion of geranylgeranyl diphosphate (GGDP) to phyllocladan-16-alpha-ol in a two step via type B cyclization into a (+)-copalyl diphosphate ((+)-CDP) intermediate. The protein is Phyllocladan-16-alpha-ol synthase (PaDC1) of Phomopsis amygdali (Fusicoccum amygdali).